We begin with the raw amino-acid sequence, 557 residues long: Aerobic glycerol-3-phosphate dehydrogenase (557 aa).

Residue 21–49 (DLVIIGGGITGAGIALDASERGMKVALVE) coordinates FAD.

Belongs to the FAD-dependent glycerol-3-phosphate dehydrogenase family. Requires FAD as cofactor.

The protein resides in the cytoplasm. The catalysed reaction is a quinone + sn-glycerol 3-phosphate = dihydroxyacetone phosphate + a quinol. It functions in the pathway polyol metabolism; glycerol degradation via glycerol kinase pathway; glycerone phosphate from sn-glycerol 3-phosphate (aerobic route): step 1/1. This Staphylococcus aureus (strain bovine RF122 / ET3-1) protein is Aerobic glycerol-3-phosphate dehydrogenase (glpD).